A 1104-amino-acid chain; its full sequence is Protein transport protein SEC31 homolog B (1104 aa).

7 WD repeats span residues 5–45 (KGVG…EIFK), 62–109 (PSSE…GSQP), 120–160 (VHKG…EPSH), 170–210 (ATQG…PIIN), 214–257 (SVRR…SPVR), 261–301 (GHQR…IVAE), and 304–344 (AGNN…RYGV). A Phosphothreonine modification is found at Thr-526. Residues 527–562 (PVSTSAKDFMPSDTDFSTKGEETQEMQEEEEESSDP) are disordered. Positions 549-560 (TQEMQEEEEESS) are enriched in acidic residues. The stretch at 662 to 707 (TLCDALASKLMAAGNTLAAVLCYICAGNVDRTVEIWSRSLANERDG) is one WD 8 repeat. Disordered stretches follow at residues 782 to 811 (LSAE…PTQA), 851 to 874 (HQAQ…PSMR), 892 to 931 (QQPT…QYPN), and 952 to 994 (TPGV…SNVP). Composition is skewed to polar residues over residues 786–811 (PETN…PTQA), 863–874 (PAPTSNAQPSMR), and 892–908 (QQPT…SNNA). Low complexity predominate over residues 959-977 (SVQPASPPTQQAAAQAAPA).

It belongs to the WD repeat SEC31 family. As to quaternary structure, interacts with SEC13A and SEC13B.

The protein resides in the golgi apparatus. The protein localises to the endoplasmic reticulum. Required for protein transport from the endoplasmic reticulum to the Golgi apparatus. This Arabidopsis thaliana (Mouse-ear cress) protein is Protein transport protein SEC31 homolog B.